The following is a 551-amino-acid chain: Delta-selinene synthase TPS7FN (551 aa).

The (2E,6E)-farnesyl diphosphate site is built by Arg266, Asp303, Asp307, Arg444, and Asp447. Mg(2+) is bound by residues Asp303 and Asp307. The short motif at 303–307 (DDIYD) is the DDXXD motif element. 3 residues coordinate Mg(2+): Asp447, Ser451, and Glu455.

It belongs to the terpene synthase family. Tpsb subfamily. Requires Mg(2+) as cofactor. Mn(2+) serves as cofactor.

The enzyme catalyses (2E,6E)-farnesyl diphosphate = delta-selinene + diphosphate. The catalysed reaction is (2E)-geranyl diphosphate = beta-myrcene + diphosphate. It catalyses the reaction (2E)-geranyl diphosphate = (4S)-limonene + diphosphate. It carries out the reaction (2E,6E)-farnesyl diphosphate + H2O = selina-6-en-4-ol + diphosphate. Its pathway is secondary metabolite biosynthesis; terpenoid biosynthesis. Involved in sesquiterpene olefins biosynthesis, constituants of cannabinoids and terpenoids-rich resins. Catalyzes mainly the conversion of (2E)-farnesyl diphosphate to delta-selinene, and also produces minor products such as selina-6-en-4-ol. Can also use (2E)-geranyl diphosphate as substrate with low efficiency, producing minor amounts of myrcene and limonene. The protein is Delta-selinene synthase TPS7FN of Cannabis sativa (Hemp).